A 155-amino-acid chain; its full sequence is Gas vesicle protein K (155 aa).

This sequence belongs to the gas vesicle GvpK family.

The protein localises to the gas vesicle. Its function is as follows. Might be involved in nucleating gas vesicle formation. Gas vesicles (GV) are hollow, gas filled proteinaceous nanostructures. During planktonic growth they allow positioning of the organism at a favorable depth for light or nutrient acquisition. In terms of biological role, cluster expression in E.coli (gvpA1-gvpA2-gvpC-gvpN-gvpJ-gvpK-gvpF-gvpG-gvpV-gvpW) allows cells to float and produces irregularly shaped gas vesicles. The chain is Gas vesicle protein K from Nostoc sp. (strain PCC 7120 / SAG 25.82 / UTEX 2576).